The following is a 205-amino-acid chain: Ribonuclease HII (205 aa).

In terms of domain architecture, RNase H type-2 spans 22 to 205 (RFICGVDEAG…RKSFLKNILR (184 aa)). A divalent metal cation contacts are provided by aspartate 28, glutamate 29, and aspartate 120.

The protein belongs to the RNase HII family. It depends on Mn(2+) as a cofactor. Requires Mg(2+) as cofactor.

The protein resides in the cytoplasm. It catalyses the reaction Endonucleolytic cleavage to 5'-phosphomonoester.. Functionally, endonuclease that specifically degrades the RNA of RNA-DNA hybrids. This is Ribonuclease HII from Caldicellulosiruptor saccharolyticus (strain ATCC 43494 / DSM 8903 / Tp8T 6331).